A 953-amino-acid chain; its full sequence is Zinc finger protein 507 (953 aa).

Residue Ser-95 is modified to Phosphoserine. 3 C2H2-type zinc fingers span residues 125–147, 155–185, and 248–270; these read YQCSLCKFLSSSFSVLKDHIKQH, LMCSECHITSRSQEELEAHVVNDHDNDANIH, and YRCLFCSYTCGQQRMLKTHAWKH. Phosphoserine is present on Ser-427. The interval 470–489 is disordered; the sequence is KGLATDENAPPGRRRTNSES. 5 C2H2-type zinc fingers span residues 641-663, 669-691, 697-720, 758-780, and 786-808; these read YRCRLCHYTSGNKGYIKQHLRVH, YQCPICEHIADNSKDLESHMIHH, YQCKQCEESFHYKSQLRNHEREQH, YRCDVCDYTSTTYVGVRNHRRIH, and YRCSLCGYVCSHPPSLKSHMWKH. A disordered region spans residues 831–888; the sequence is GRVLGKSPGKTQLKSSEESADPVTGSSENAVSSSELMSQTPSEVLGTNENEKLSPTSN. A compositionally biased stretch (polar residues) spans 854–888; that stretch reads TGSSENAVSSSELMSQTPSEVLGTNENEKLSPTSN. A C2H2-type 9 zinc finger spans residues 911–933; sequence FCCCICGFESTSKENLLDHMKEH.

It belongs to the krueppel C2H2-type zinc-finger protein family.

The protein localises to the nucleus. Its function is as follows. May be involved in transcriptional regulation. This chain is Zinc finger protein 507 (ZNF507), found in Homo sapiens (Human).